A 475-amino-acid chain; its full sequence is Ribulose bisphosphate carboxylase large chain (475 aa).

Positions 1 to 2 (MS) are excised as a propeptide. Residue Pro3 is modified to N-acetylproline. Position 14 is an N6,N6,N6-trimethyllysine (Lys14). Positions 123 and 173 each coordinate substrate. Catalysis depends on Lys175, which acts as the Proton acceptor. Residue Lys177 participates in substrate binding. Mg(2+) contacts are provided by Lys201, Asp203, and Glu204. The residue at position 201 (Lys201) is an N6-carboxylysine. His294 serves as the catalytic Proton acceptor. Positions 295, 327, and 379 each coordinate substrate.

It belongs to the RuBisCO large chain family. Type I subfamily. In terms of assembly, heterohexadecamer of 8 large chains and 8 small chains; disulfide-linked. The disulfide link is formed within the large subunit homodimers. Mg(2+) serves as cofactor. In terms of processing, the disulfide bond which can form in the large chain dimeric partners within the hexadecamer appears to be associated with oxidative stress and protein turnover.

The protein localises to the plastid. The protein resides in the chloroplast. It carries out the reaction 2 (2R)-3-phosphoglycerate + 2 H(+) = D-ribulose 1,5-bisphosphate + CO2 + H2O. The enzyme catalyses D-ribulose 1,5-bisphosphate + O2 = 2-phosphoglycolate + (2R)-3-phosphoglycerate + 2 H(+). Functionally, ruBisCO catalyzes two reactions: the carboxylation of D-ribulose 1,5-bisphosphate, the primary event in carbon dioxide fixation, as well as the oxidative fragmentation of the pentose substrate in the photorespiration process. Both reactions occur simultaneously and in competition at the same active site. This chain is Ribulose bisphosphate carboxylase large chain, found in Alnus incana (White alder).